The chain runs to 208 residues: Large ribosomal subunit protein uL3 (208 aa).

The tract at residues Gly116 to Ala148 is disordered.

The protein belongs to the universal ribosomal protein uL3 family. As to quaternary structure, part of the 50S ribosomal subunit. Forms a cluster with proteins L14 and L19.

In terms of biological role, one of the primary rRNA binding proteins, it binds directly near the 3'-end of the 23S rRNA, where it nucleates assembly of the 50S subunit. The protein is Large ribosomal subunit protein uL3 of Streptococcus pneumoniae (strain Hungary19A-6).